Consider the following 412-residue polypeptide: Maintenance of mitochondrial morphology protein 1 (412 aa).

The Lumenal portion of the chain corresponds to 1–19 (MAQDVCPTRSEPSLSFLQG). A helical transmembrane segment spans residues 20–40 (LILGQLSVVLLIAAFIKFFIF). Residues 41-412 (GEAPSAEETA…GSLPGIDMPT (372 aa)) are Cytoplasmic-facing. Residues 121-337 (QPESLDWFNV…EPRFQEIELP (217 aa)) enclose the SMP-LTD domain. Residues 372-384 (ARQELDTETDGLR) show a composition bias toward basic and acidic residues. The disordered stretch occupies residues 372–412 (ARQELDTETDGLRYRRRPVGDDTYSVSGSMPGSLPGIDMPT).

Belongs to the MMM1 family. As to quaternary structure, homodimer. Component of the ER-mitochondria encounter structure (ERMES) or MDM complex, composed of MMM1, MDM10, MDM12 and MDM34. An MMM1 homodimer associates with one molecule of MDM12 on each side in a pairwise head-to-tail manner, and the SMP-LTD domains of MMM1 and MDM12 generate a continuous hydrophobic tunnel for phospholipid trafficking.

The protein localises to the endoplasmic reticulum membrane. Its function is as follows. Component of the ERMES/MDM complex, which serves as a molecular tether to connect the endoplasmic reticulum (ER) and mitochondria. Components of this complex are involved in the control of mitochondrial shape and protein biogenesis, and function in nonvesicular lipid trafficking between the ER and mitochondria. The MDM12-MMM1 subcomplex functions in the major beta-barrel assembly pathway that is responsible for biogenesis of all outer membrane beta-barrel proteins, and acts in a late step after the SAM complex. The MDM10-MDM12-MMM1 subcomplex further acts in the TOM40-specific pathway after the action of the MDM12-MMM1 complex. Essential for establishing and maintaining the structure of mitochondria and maintenance of mtDNA nucleoids. The chain is Maintenance of mitochondrial morphology protein 1 from Podospora anserina (strain S / ATCC MYA-4624 / DSM 980 / FGSC 10383) (Pleurage anserina).